Reading from the N-terminus, the 97-residue chain is uncharacterized protein (97 aa).

3 helical membrane passes run 7 to 27 (CIAPLIYLVFGVSSTWLIGLG), 34 to 54 (IPMLIISLCAFAYGFWLLMFS), and 69 to 89 (IVLYWIVFIVMIFFLTYPTIL).

It localises to the cell membrane. This is an uncharacterized protein from Haemophilus influenzae (strain ATCC 51907 / DSM 11121 / KW20 / Rd).